Consider the following 264-residue polypeptide: Thymidylate synthase (264 aa).

Arginine 21 is a binding site for dUMP. Position 51 (histidine 51) interacts with (6R)-5,10-methylene-5,6,7,8-tetrahydrofolate. 126–127 (RR) serves as a coordination point for dUMP. Residue cysteine 146 is the Nucleophile of the active site. DUMP-binding positions include 166–169 (RSCD), asparagine 177, and 207–209 (HLY). Aspartate 169 provides a ligand contact to (6R)-5,10-methylene-5,6,7,8-tetrahydrofolate. Alanine 263 contacts (6R)-5,10-methylene-5,6,7,8-tetrahydrofolate.

It belongs to the thymidylate synthase family. Bacterial-type ThyA subfamily. In terms of assembly, homodimer.

It localises to the cytoplasm. It carries out the reaction dUMP + (6R)-5,10-methylene-5,6,7,8-tetrahydrofolate = 7,8-dihydrofolate + dTMP. Its pathway is pyrimidine metabolism; dTTP biosynthesis. In terms of biological role, catalyzes the reductive methylation of 2'-deoxyuridine-5'-monophosphate (dUMP) to 2'-deoxythymidine-5'-monophosphate (dTMP) while utilizing 5,10-methylenetetrahydrofolate (mTHF) as the methyl donor and reductant in the reaction, yielding dihydrofolate (DHF) as a by-product. This enzymatic reaction provides an intracellular de novo source of dTMP, an essential precursor for DNA biosynthesis. The chain is Thymidylate synthase from Baumannia cicadellinicola subsp. Homalodisca coagulata.